A 640-amino-acid polypeptide reads, in one-letter code: Zinc finger and BTB domain-containing protein 22 (640 aa).

The BTB domain occupies 57 to 121 (CDVSIRVQGR…AYTGRLSMAA (65 aa)). Disordered regions lie at residues 191-244 (RSHA…PVFP), 308-327 (PAPAPLVPQDPDLEEDEEED), and 332-482 (CEDD…GGTG). Residues 192–210 (SHASSRASENQSPSSSNYF) show a composition bias toward polar residues. A Phosphoserine modification is found at Ser203. The segment covering 318–327 (PDLEEDEEED) has biased composition (acidic residues). Residues 431-442 (SSSSSSSSSSSS) show a composition bias toward low complexity. Over residues 469-482 (GMPGGPGGTPGGTG) the composition is skewed to gly residues. The C2H2-type 1; atypical zinc-finger motif lies at 490–511 (FLCHCGKAFSHKSMRDRHVNMH). 2 C2H2-type zinc fingers span residues 517 to 539 (FDCPVCNKKFKMKHHLTEHMKTH) and 545 to 571 (YECGVCAKKFMWRDSFMRHRGHCERRH). Residues 571 to 640 (HRLVGGGGGG…MGFGGGGGTN (70 aa)) are disordered. Residues 574-588 (VGGGGGGGPGPGGPT) show a composition bias toward gly residues.

The protein belongs to the krueppel C2H2-type zinc-finger protein family.

The protein localises to the nucleus. In terms of biological role, may be involved in transcriptional regulation. The protein is Zinc finger and BTB domain-containing protein 22 (ZBTB22) of Canis lupus familiaris (Dog).